We begin with the raw amino-acid sequence, 185 residues long: Phospholipase A2 inhibitor 25 kDa subunit (185 aa).

Intrachain disulfides connect Cys3–Cys27, Cys6–Cys13, Cys20–Cys48, Cys54–Cys75, Cys76–Cys81, Cys101–Cys126, Cys119–Cys146, and Cys152–Cys172.

It belongs to the CNF-like-inhibitor family. Heterodimer with phospholipase A2 inhibitor 31 kDa. In terms of tissue distribution, expressed by the liver.

It localises to the secreted. In terms of biological role, inhibits the enzymatic activity of phospholipase A2. The polypeptide is Phospholipase A2 inhibitor 25 kDa subunit (Naja kaouthia (Monocled cobra)).